The chain runs to 536 residues: Chaperonin GroEL (536 aa).

Residues threonine 29–proline 32, aspartate 86–threonine 90, glycine 413, and aspartate 494 each bind ATP.

It belongs to the chaperonin (HSP60) family. As to quaternary structure, forms a cylinder of 14 subunits composed of two heptameric rings stacked back-to-back. Interacts with the co-chaperonin GroES.

It is found in the cytoplasm. It catalyses the reaction ATP + H2O + a folded polypeptide = ADP + phosphate + an unfolded polypeptide.. In terms of biological role, together with its co-chaperonin GroES, plays an essential role in assisting protein folding. The GroEL-GroES system forms a nano-cage that allows encapsulation of the non-native substrate proteins and provides a physical environment optimized to promote and accelerate protein folding. The chain is Chaperonin GroEL from Acholeplasma laidlawii (strain PG-8A).